Consider the following 35-residue polypeptide: U5-ctenitoxin-Co1a (35 aa).

4 disulfide bridges follow: cysteine 4/cysteine 18, cysteine 11/cysteine 24, cysteine 17/cysteine 32, and cysteine 26/cysteine 30.

As to expression, expressed by the venom gland.

It localises to the secreted. In terms of biological role, blocks voltage-gated sodium channels (Nav). The sequence is that of U5-ctenitoxin-Co1a from Ctenus ornatus (Brazilian spider).